The sequence spans 288 residues: Thymidylate synthase (288 aa).

DUMP-binding positions include Arg-21 and 150–151 (RR). Cys-170 acts as the Nucleophile in catalysis. DUMP is bound by residues 191-194 (RSGD), Asn-202, and 232-234 (HIY). Asp-194 contributes to the (6R)-5,10-methylene-5,6,7,8-tetrahydrofolate binding site. Ala-287 lines the (6R)-5,10-methylene-5,6,7,8-tetrahydrofolate pocket.

It belongs to the thymidylate synthase family. Bacterial-type ThyA subfamily. In terms of assembly, homodimer.

It is found in the cytoplasm. It carries out the reaction dUMP + (6R)-5,10-methylene-5,6,7,8-tetrahydrofolate = 7,8-dihydrofolate + dTMP. It participates in pyrimidine metabolism; dTTP biosynthesis. Catalyzes the reductive methylation of 2'-deoxyuridine-5'-monophosphate (dUMP) to 2'-deoxythymidine-5'-monophosphate (dTMP) while utilizing 5,10-methylenetetrahydrofolate (mTHF) as the methyl donor and reductant in the reaction, yielding dihydrofolate (DHF) as a by-product. This enzymatic reaction provides an intracellular de novo source of dTMP, an essential precursor for DNA biosynthesis. This Mesoplasma florum (strain ATCC 33453 / NBRC 100688 / NCTC 11704 / L1) (Acholeplasma florum) protein is Thymidylate synthase.